We begin with the raw amino-acid sequence, 415 residues long: Multifunctional CCA protein (415 aa).

2 residues coordinate ATP: Gly-8 and Arg-11. The CTP site is built by Gly-8 and Arg-11. Mg(2+) is bound by residues Glu-21 and Asp-23. Arg-91, Arg-137, and Arg-140 together coordinate ATP. 3 residues coordinate CTP: Arg-91, Arg-137, and Arg-140. One can recognise an HD domain in the interval 228–329; the sequence is AGTHTLMALD…VELFEGLDLF (102 aa).

Belongs to the tRNA nucleotidyltransferase/poly(A) polymerase family. Bacterial CCA-adding enzyme type 1 subfamily. As to quaternary structure, monomer. Can also form homodimers and oligomers. The cofactor is Mg(2+). Ni(2+) is required as a cofactor.

The catalysed reaction is a tRNA precursor + 2 CTP + ATP = a tRNA with a 3' CCA end + 3 diphosphate. It catalyses the reaction a tRNA with a 3' CCA end + 2 CTP + ATP = a tRNA with a 3' CCACCA end + 3 diphosphate. Catalyzes the addition and repair of the essential 3'-terminal CCA sequence in tRNAs without using a nucleic acid template. Adds these three nucleotides in the order of C, C, and A to the tRNA nucleotide-73, using CTP and ATP as substrates and producing inorganic pyrophosphate. tRNA 3'-terminal CCA addition is required both for tRNA processing and repair. Also involved in tRNA surveillance by mediating tandem CCA addition to generate a CCACCA at the 3' terminus of unstable tRNAs. While stable tRNAs receive only 3'-terminal CCA, unstable tRNAs are marked with CCACCA and rapidly degraded. The polypeptide is Multifunctional CCA protein (Halorhodospira halophila (strain DSM 244 / SL1) (Ectothiorhodospira halophila (strain DSM 244 / SL1))).